A 233-amino-acid chain; its full sequence is Large ribosomal subunit protein uL1 (233 aa).

This sequence belongs to the universal ribosomal protein uL1 family. In terms of assembly, part of the 50S ribosomal subunit.

Binds directly to 23S rRNA. The L1 stalk is quite mobile in the ribosome, and is involved in E site tRNA release. Its function is as follows. Protein L1 is also a translational repressor protein, it controls the translation of the L11 operon by binding to its mRNA. This chain is Large ribosomal subunit protein uL1, found in Vibrio vulnificus (strain CMCP6).